Reading from the N-terminus, the 300-residue chain is MALVAGLRAFGAKWPSWLRRSPWAPLSAGFCSPGSARPAGPESEPRLTSTRQQDGIRNIVLSNPRRRNALSLAMLKSLRSDILHEAESEDLKVIIISAEGPVFSSGHDLKELTGAQGRDYHTEVFQTCSEVMMLIRNHPVPIVAMVNGLATAAGCQLVASCDIAVASDKSSFATPGVNVGLFCSTPAVALGRAVPRKVALEMLFTGEPISAQEALRHGLISKVVPEEQLEEEATRIAKKIASLSRSVVALGKATFYKQLPQDLSTAYFLASQAMVDNLTLKDGQEGIEAFIQKRRPVWSH.

Residues 1 to 66 constitute a mitochondrion transit peptide; sequence MALVAGLRAF…RNIVLSNPRR (66 aa). A disordered region spans residues 32–54; it reads SPGSARPAGPESEPRLTSTRQQD. Lys-110 carries the post-translational modification N6-succinyllysine.

Belongs to the enoyl-CoA hydratase/isomerase family.

It localises to the mitochondrion. Functionally, may play a role in fatty acid biosynthesis and insulin sensitivity. This is Enoyl-CoA hydratase domain-containing protein 3, mitochondrial from Rattus norvegicus (Rat).